A 343-amino-acid chain; its full sequence is Aspartate carbamoyltransferase catalytic subunit (343 aa).

2 residues coordinate carbamoyl phosphate: arginine 91 and threonine 92. Lysine 119 is a binding site for L-aspartate. The carbamoyl phosphate site is built by arginine 141, histidine 171, and glutamine 174. Arginine 204 and arginine 259 together coordinate L-aspartate. Positions 300 and 301 each coordinate carbamoyl phosphate.

The protein belongs to the aspartate/ornithine carbamoyltransferase superfamily. ATCase family. As to quaternary structure, heterododecamer (2C3:3R2) of six catalytic PyrB chains organized as two trimers (C3), and six regulatory PyrI chains organized as three dimers (R2).

The enzyme catalyses carbamoyl phosphate + L-aspartate = N-carbamoyl-L-aspartate + phosphate + H(+). The protein operates within pyrimidine metabolism; UMP biosynthesis via de novo pathway; (S)-dihydroorotate from bicarbonate: step 2/3. Functionally, catalyzes the condensation of carbamoyl phosphate and aspartate to form carbamoyl aspartate and inorganic phosphate, the committed step in the de novo pyrimidine nucleotide biosynthesis pathway. The sequence is that of Aspartate carbamoyltransferase catalytic subunit from Burkholderia vietnamiensis (strain G4 / LMG 22486) (Burkholderia cepacia (strain R1808)).